The primary structure comprises 187 residues: Protein TfaD (187 aa).

It in the C-terminal section; belongs to the tfa family.

This chain is Protein TfaD (tfaD), found in Escherichia coli (strain K12).